Reading from the N-terminus, the 187-residue chain is MHDPKESLETNIQETESQEKLPETPIIEEEPILTLPDDQINQLQQEVAELKDQLIWQKAENENLRKRQARELENAYKFASERLLKDLLPVIDSLNLGLQAALDTENEAVKQFITGSEMTLTMFQETLARHGIEEINPVGEKFNPELHEAVTMTPSEAHEPNTVIQVTQKGYLLNGRTVRAAQVIVSK.

The segment at M1–I26 is disordered.

Belongs to the GrpE family. As to quaternary structure, homodimer.

It localises to the cytoplasm. Participates actively in the response to hyperosmotic and heat shock by preventing the aggregation of stress-denatured proteins, in association with DnaK and GrpE. It is the nucleotide exchange factor for DnaK and may function as a thermosensor. Unfolded proteins bind initially to DnaJ; upon interaction with the DnaJ-bound protein, DnaK hydrolyzes its bound ATP, resulting in the formation of a stable complex. GrpE releases ADP from DnaK; ATP binding to DnaK triggers the release of the substrate protein, thus completing the reaction cycle. Several rounds of ATP-dependent interactions between DnaJ, DnaK and GrpE are required for fully efficient folding. The chain is Protein GrpE from Dichelobacter nodosus (strain VCS1703A).